Here is a 396-residue protein sequence, read N- to C-terminus: S-adenosylmethionine synthase 3 (396 aa).

Glu12 serves as a coordination point for Mg(2+). His18 lines the ATP pocket. Glu46 contacts K(+). The L-methionine site is built by Glu59 and Gln102. Residues Asp170–Lys172, Ser238–Phe241, Asp249, Arg255–Lys256, Ala272, Lys276, and Lys280 each bind ATP. Asp249 lines the L-methionine pocket. Lys280 is a binding site for L-methionine.

Belongs to the AdoMet synthase family. Homotetramer. The cofactor is Mn(2+). Requires Mg(2+) as cofactor. Co(2+) is required as a cofactor. K(+) serves as cofactor.

Its subcellular location is the cytoplasm. The catalysed reaction is L-methionine + ATP + H2O = S-adenosyl-L-methionine + phosphate + diphosphate. The protein operates within amino-acid biosynthesis; S-adenosyl-L-methionine biosynthesis; S-adenosyl-L-methionine from L-methionine: step 1/1. Functionally, catalyzes the formation of S-adenosylmethionine from methionine and ATP. The reaction comprises two steps that are both catalyzed by the same enzyme: formation of S-adenosylmethionine (AdoMet) and triphosphate, and subsequent hydrolysis of the triphosphate. The protein is S-adenosylmethionine synthase 3 (METK3) of Oryza sativa subsp. japonica (Rice).